Consider the following 81-residue polypeptide: UPF0248 protein SSO2687 (81 aa).

It belongs to the UPF0248 family.

The sequence is that of UPF0248 protein SSO2687 from Saccharolobus solfataricus (strain ATCC 35092 / DSM 1617 / JCM 11322 / P2) (Sulfolobus solfataricus).